A 101-amino-acid polypeptide reads, in one-letter code: Protein Tat (101 aa).

Basic and acidic residues predominate over residues M1 to K12. Residues M1 to A20 are disordered. The tract at residues M1–S24 is interaction with human CREBBP. A transactivation region spans residues M1–G48. The Zn(2+) site is built by C22, C25, and C27. The tract at residues C22 to C37 is cysteine-rich. K28 carries the post-translational modification N6-acetyllysine; by host PCAF. Residues C30, H33, C34, and C37 each contribute to the Zn(2+) site. The segment at F38–G48 is core. Over residues G48 to R57 the composition is skewed to basic residues. The tract at residues G48–D101 is disordered. A Nuclear localization signal, RNA-binding (TAR), and protein transduction motif is present at residues R49 to R57. Residues R49–E86 are interaction with the host capping enzyme RNGTT. K50 and K51 each carry N6-acetyllysine; by host EP300 and GCN5L2. Asymmetric dimethylarginine; by host PRMT6 occurs at positions 52 and 53. A compositionally biased stretch (polar residues) spans Q60 to S75. Residue K71 forms a Glycyl lysine isopeptide (Lys-Gly) (interchain with G-Cter in ubiquitin) linkage. Residues R78–D80 carry the Cell attachment site motif. Positions G83–D101 are enriched in basic and acidic residues.

Belongs to the lentiviruses Tat family. As to quaternary structure, interacts with host CCNT1. Associates with the P-TEFb complex composed at least of Tat, P-TEFb (CDK9 and CCNT1), TAR RNA, RNA Pol II. Recruits the HATs CREBBP, TAF1/TFIID, EP300, PCAF and GCN5L2. Interacts with host KAT5/Tip60; this interaction targets the latter to degradation. Interacts with the host deacetylase SIRT1. Interacts with host capping enzyme RNGTT; this interaction stimulates RNGTT. Binds to host KDR, and to the host integrins ITGAV/ITGB3 and ITGA5/ITGB1. Interacts with host KPNB1/importin beta-1 without previous binding to KPNA1/importin alpha-1. Interacts with EIF2AK2. Interacts with host nucleosome assembly protein NAP1L1; this interaction may be required for the transport of Tat within the nucleus, since the two proteins interact at the nuclear rim. Interacts with host C1QBP/SF2P32; this interaction involves lysine-acetylated Tat. Interacts with the host chemokine receptors CCR2, CCR3 and CXCR4. Interacts with host DPP4/CD26; this interaction may trigger an anti-proliferative effect. Interacts with host LDLR. Interacts with the host extracellular matrix metalloproteinase MMP1. Interacts with host PRMT6; this interaction mediates Tat's methylation. Interacts with, and is ubiquitinated by MDM2/Hdm2. Interacts with host PSMC3 and HTATIP2. Interacts with STAB1; this interaction may overcome SATB1-mediated repression of IL2 and IL2RA (interleukin) in T cells by binding to the same domain than HDAC1. Interacts (when acetylated) with human CDK13, thereby increasing HIV-1 mRNA splicing and promoting the production of the doubly spliced HIV-1 protein Nef. Interacts with host TBP; this interaction modulates the activity of transcriptional pre-initiation complex. Interacts with host RELA. Interacts with host PLSCR1; this interaction negatively regulates Tat transactivation activity by altering its subcellular distribution. In terms of processing, asymmetrical arginine methylation by host PRMT6 seems to diminish the transactivation capacity of Tat and affects the interaction with host CCNT1. Post-translationally, acetylation by EP300, CREBBP, GCN5L2/GCN5 and PCAF regulates the transactivation activity of Tat. EP300-mediated acetylation of Lys-50 promotes dissociation of Tat from the TAR RNA through the competitive binding to PCAF's bromodomain. In addition, the non-acetylated Tat's N-terminus can also interact with PCAF. PCAF-mediated acetylation of Lys-28 enhances Tat's binding to CCNT1. Lys-50 is deacetylated by SIRT1. Polyubiquitination by host MDM2 does not target Tat to degradation, but activates its transactivation function and fosters interaction with CCNT1 and TAR RNA. In terms of processing, phosphorylated by EIF2AK2 on serine and threonine residues adjacent to the basic region important for TAR RNA binding and function. Phosphorylation of Tat by EIF2AK2 is dependent on the prior activation of EIF2AK2 by dsRNA.

It is found in the host nucleus. The protein localises to the host nucleolus. The protein resides in the host cytoplasm. It localises to the secreted. Transcriptional activator that increases RNA Pol II processivity, thereby increasing the level of full-length viral transcripts. Recognizes a hairpin structure at the 5'-LTR of the nascent viral mRNAs referred to as the transactivation responsive RNA element (TAR) and recruits the cyclin T1-CDK9 complex (P-TEFb complex) that will in turn hyperphosphorylate the RNA polymerase II to allow efficient elongation. The CDK9 component of P-TEFb and other Tat-activated kinases hyperphosphorylate the C-terminus of RNA Pol II that becomes stabilized and much more processive. Other factors such as HTATSF1/Tat-SF1, SUPT5H/SPT5, and HTATIP2 are also important for Tat's function. Besides its effect on RNA Pol II processivity, Tat induces chromatin remodeling of proviral genes by recruiting the histone acetyltransferases (HATs) CREBBP, EP300 and PCAF to the chromatin. This also contributes to the increase in proviral transcription rate, especially when the provirus integrates in transcriptionally silent region of the host genome. To ensure maximal activation of the LTR, Tat mediates nuclear translocation of NF-kappa-B by interacting with host RELA. Through its interaction with host TBP, Tat may also modulate transcription initiation. Tat can reactivate a latently infected cell by penetrating in it and transactivating its LTR promoter. In the cytoplasm, Tat is thought to act as a translational activator of HIV-1 mRNAs. In terms of biological role, extracellular circulating Tat can be endocytosed by surrounding uninfected cells via the binding to several surface receptors such as CD26, CXCR4, heparan sulfate proteoglycans (HSPG) or LDLR. Neurons are rarely infected, but they internalize Tat via their LDLR. Through its interaction with nuclear HATs, Tat is potentially able to control the acetylation-dependent cellular gene expression. Modulates the expression of many cellular genes involved in cell survival, proliferation or in coding for cytokines or cytokine receptors. Tat plays a role in T-cell and neurons apoptosis. Tat induced neurotoxicity and apoptosis probably contribute to neuroAIDS. Circulating Tat also acts as a chemokine-like and/or growth factor-like molecule that binds to specific receptors on the surface of the cells, affecting many cellular pathways. In the vascular system, Tat binds to ITGAV/ITGB3 and ITGA5/ITGB1 integrins dimers at the surface of endothelial cells and competes with bFGF for heparin-binding sites, leading to an excess of soluble bFGF. The polypeptide is Protein Tat (Homo sapiens (Human)).